A 429-amino-acid chain; its full sequence is Probable M18 family aminopeptidase 2 (429 aa).

3 residues coordinate Zn(2+): His-82, His-156, and His-401.

This sequence belongs to the peptidase M18 family. Zn(2+) is required as a cofactor.

In Pseudomonas aeruginosa (strain LESB58), this protein is Probable M18 family aminopeptidase 2.